The chain runs to 219 residues: N-(5'-phosphoribosyl)anthranilate isomerase (219 aa).

The protein belongs to the TrpF family.

It carries out the reaction N-(5-phospho-beta-D-ribosyl)anthranilate = 1-(2-carboxyphenylamino)-1-deoxy-D-ribulose 5-phosphate. It participates in amino-acid biosynthesis; L-tryptophan biosynthesis; L-tryptophan from chorismate: step 3/5. The polypeptide is N-(5'-phosphoribosyl)anthranilate isomerase (Bradyrhizobium sp. (strain ORS 278)).